The sequence spans 874 residues: Coatomer subunit gamma-1 (874 aa).

Residues 1–11 are compositionally biased toward basic and acidic residues; sequence MLKKFDKKDEE. Residues 1–21 are disordered; the sequence is MLKKFDKKDEESGGGSNPLQH. HEAT repeat units follow at residues 64–101, 283–320, 322–355, and 356–392; these read TEATEAFFAMTKLFQSNDPTLRRMCYLTIKEMSCIAED, KELAPAVSVLQLFCSSPKAALRYAAVRTLNKVAMKHPS, VTACNLDLENLVTDSNRSIATLAITTLLKTGSES, and SIDRLMKQISSFMSEISDEFKVVVVQAISALCQKYPR. Thr-594 bears the Phosphothreonine mark. Positions 609 to 874 are interaction with ZNF289/ARFGAP2; sequence RQEIFQEQLA…PVDIILASVG (266 aa).

This sequence belongs to the COPG family. As to quaternary structure, oligomeric complex that consists of at least the alpha, beta, beta', gamma, delta, epsilon and zeta subunits. Interacts with ZNF289/ARFGAP2 through its C-terminal appendage domain. Interacts with EGFR upon EGF treatment; interaction is essential for regulation of EGF-dependent nuclear transport of EGFR by retrograde trafficking from the Golgi to the ER. The coatomer interacts with KDEL receptors; the interaction is important for retrograde trafficking of KDEL-bearing proteins from the Golgi to the endoplasmic reticulum. Interacts with COPB1. Interacts with TMED10 (via C-terminus). Interacts with TMED2, TMED3, TMED7 and TMED9.

The protein localises to the cytoplasm. It is found in the cytosol. It localises to the golgi apparatus membrane. The protein resides in the cytoplasmic vesicle. Its subcellular location is the COPI-coated vesicle membrane. The coatomer is a cytosolic protein complex that binds to dilysine motifs and reversibly associates with Golgi non-clathrin-coated vesicles, which further mediate biosynthetic protein transport from the ER, via the Golgi up to the trans Golgi network. Coatomer complex is required for budding from Golgi membranes, and is essential for the retrograde Golgi-to-ER transport of dilysine-tagged proteins. In mammals, the coatomer can only be recruited by membranes associated to ADP-ribosylation factors (ARFs), which are small GTP-binding proteins; the complex also influences the Golgi structural integrity, as well as the processing, activity, and endocytic recycling of LDL receptors. Required for limiting lipid storage in lipid droplets. Involved in lipid homeostasis by regulating the presence of perilipin family members PLIN2 and PLIN3 at the lipid droplet surface and promoting the association of adipocyte triglyceride lipase (PNPLA2) with the lipid droplet surface to mediate lipolysis. In Mus musculus (Mouse), this protein is Coatomer subunit gamma-1 (Copg1).